Consider the following 138-residue polypeptide: uncharacterized protein (138 aa).

This is an uncharacterized protein from Caenorhabditis elegans.